The chain runs to 278 residues: Elongation factor Ts (278 aa).

An involved in Mg(2+) ion dislocation from EF-Tu region spans residues 80–83; sequence TDFV.

This sequence belongs to the EF-Ts family.

It localises to the cytoplasm. Functionally, associates with the EF-Tu.GDP complex and induces the exchange of GDP to GTP. It remains bound to the aminoacyl-tRNA.EF-Tu.GTP complex up to the GTP hydrolysis stage on the ribosome. This Arthrobacter sp. (strain FB24) protein is Elongation factor Ts.